The chain runs to 267 residues: Tryptophan synthase alpha chain (267 aa).

Catalysis depends on proton acceptor residues E47 and D58.

It belongs to the TrpA family. Tetramer of two alpha and two beta chains.

The enzyme catalyses (1S,2R)-1-C-(indol-3-yl)glycerol 3-phosphate + L-serine = D-glyceraldehyde 3-phosphate + L-tryptophan + H2O. It participates in amino-acid biosynthesis; L-tryptophan biosynthesis; L-tryptophan from chorismate: step 5/5. Functionally, the alpha subunit is responsible for the aldol cleavage of indoleglycerol phosphate to indole and glyceraldehyde 3-phosphate. The protein is Tryptophan synthase alpha chain of Chlorobium phaeobacteroides (strain DSM 266 / SMG 266 / 2430).